The chain runs to 476 residues: Chromosomal replication initiator protein DnaA (476 aa).

A domain I, interacts with DnaA modulators region spans residues 1-87 (MSESSHVGLW…LMYNVLVDKS (87 aa)). Positions 87 to 130 (SSGATVNQESTTRSTAIPQSGLPRVDERKAPGLLRAPAVQDLDP) are domain II. The domain III, AAA+ region stretch occupies residues 131 to 348 (HLNPNYNFET…GIVISIMAHS (218 aa)). ATP contacts are provided by glycine 176, glycine 178, lysine 179, and threonine 180. The interval 349 to 476 (TIYNKEIDLD…KKRNVSNGER (128 aa)) is domain IV, binds dsDNA.

Belongs to the DnaA family. Oligomerizes as a right-handed, spiral filament on DNA at oriC.

The protein resides in the cytoplasm. Its function is as follows. Plays an essential role in the initiation and regulation of chromosomal replication. ATP-DnaA binds to the origin of replication (oriC) to initiate formation of the DNA replication initiation complex once per cell cycle. Binds the DnaA box (a 9 base pair repeat at the origin) and separates the double-stranded (ds)DNA. Forms a right-handed helical filament on oriC DNA; dsDNA binds to the exterior of the filament while single-stranded (ss)DNA is stabiized in the filament's interior. The ATP-DnaA-oriC complex binds and stabilizes one strand of the AT-rich DNA unwinding element (DUE), permitting loading of DNA polymerase. After initiation quickly degrades to an ADP-DnaA complex that is not apt for DNA replication. Binds acidic phospholipids. This Bacteroides fragilis (strain YCH46) protein is Chromosomal replication initiator protein DnaA.